We begin with the raw amino-acid sequence, 259 residues long: Thrombin-like enzyme gyroxin B1.7 (259 aa).

Residues 1 to 18 (MVLIRVLANLLILQLSYA) form the signal peptide. The propeptide occupies 19 to 259 (QKSSELVIGG…AGNTAVTCPP (241 aa)). In terms of domain architecture, Peptidase S1 spans 25–250 (VIGGDECNIN…DTEWIQSIIA (226 aa)). Disulfide bonds link Cys31/Cys162, Cys49/Cys65, Cys141/Cys211, Cys173/Cys190, and Cys201/Cys226. His64 functions as the Charge relay system in the catalytic mechanism. Asn102 is a glycosylation site (N-linked (GlcNAc...) asparagine). Asp109 serves as the catalytic Charge relay system. Ser205 serves as the catalytic Charge relay system.

It belongs to the peptidase S1 family. Snake venom subfamily. Monomer. Expressed by the venom gland.

It localises to the secreted. Thrombin-like snake venom serine protease. Displays a specificity similar to trypsin. Releases only fibrinopeptide A in the conversion of fibrinogen to fibrin. Shows coagulant, esterase and amidase activities. Reversibly increases the permeability of the blood brain barrier (BBB) in mice. Induces the barrel rotation syndrome in mice, which is manifested by gyroxin-like, rapid rolling motions. This syndrome may be due to its effect on BBB permeability, and certainly also to other actions affecting endogenous substrates present in the endothelium, nervous tissues or blood. This chain is Thrombin-like enzyme gyroxin B1.7, found in Crotalus durissus terrificus (South American rattlesnake).